The primary structure comprises 193 residues: Rho-related GTP-binding protein RhoA-A (193 aa).

GTP is bound by residues 12–19, 30–37, 59–63, 117–120, and 160–162; these read GDGACGKT, FPEVYVPT, DTAGQ, NKKD, and SAK. A glycan ((Microbial infection) O-linked (GlcNAc) tyrosine; by Yersinia Afp18) is linked at Y34. C190 is subject to Cysteine methyl ester. Residue C190 is the site of S-geranylgeranyl cysteine attachment. Residues 191–193 constitute a propeptide, removed in mature form; the sequence is ALL.

This sequence belongs to the small GTPase superfamily. Rho family. (Microbial infection) Glycosylated at Tyr-34 by Yersinia ruckeri toxin Afp18. Mono-O-GlcNAcylation by Afp18 inhibits RhoA activation by guanine nucleotide exchange factors and blocks RhoA signaling.

Its subcellular location is the cell membrane. Regulates a signal transduction pathway linking plasma membrane receptors to the assembly of focal adhesions and actin stress fibers. The sequence is that of Rho-related GTP-binding protein RhoA-A from Danio rerio (Zebrafish).